The primary structure comprises 610 residues: UvrABC system protein C (610 aa).

In terms of domain architecture, GIY-YIG spans 16-94 (SQPGVYRMYD…IKLYQPRYNV (79 aa)). Residues 204 to 239 (DQVLTQLIARMEKASQSLEFEEAARIRDQIQAVRRV) form the UVR domain. The tract at residues 540-559 (HAISGHRKKRAKVKSTSSLE) is disordered. The span at 543–552 (SGHRKKRAKV) shows a compositional bias: basic residues.

Belongs to the UvrC family. In terms of assembly, interacts with UvrB in an incision complex.

The protein resides in the cytoplasm. Functionally, the UvrABC repair system catalyzes the recognition and processing of DNA lesions. UvrC both incises the 5' and 3' sides of the lesion. The N-terminal half is responsible for the 3' incision and the C-terminal half is responsible for the 5' incision. This is UvrABC system protein C from Klebsiella pneumoniae (strain 342).